A 130-amino-acid polypeptide reads, in one-letter code: D-ribose pyranase (130 aa).

The active-site Proton donor is the histidine 20. Substrate is bound by residues aspartate 28, histidine 97, and 119–121 (YSN).

This sequence belongs to the RbsD / FucU family. RbsD subfamily. As to quaternary structure, homodecamer.

It localises to the cytoplasm. It catalyses the reaction beta-D-ribopyranose = beta-D-ribofuranose. It functions in the pathway carbohydrate metabolism; D-ribose degradation; D-ribose 5-phosphate from beta-D-ribopyranose: step 1/2. Functionally, catalyzes the interconversion of beta-pyran and beta-furan forms of D-ribose. This Lacticaseibacillus casei (strain BL23) (Lactobacillus casei) protein is D-ribose pyranase.